Consider the following 346-residue polypeptide: Selenide, water dikinase (346 aa).

The active site involves Cys-15. Residues Lys-18 and 46–48 (SKD) contribute to the ATP site. A Mg(2+)-binding site is contributed by Asp-49. Residues Asp-66, Asp-89, and 137 to 139 (GHS) contribute to the ATP site. Asp-89 lines the Mg(2+) pocket. Asp-225 is a binding site for Mg(2+).

Belongs to the selenophosphate synthase 1 family. Class I subfamily. In terms of assembly, homodimer. Requires Mg(2+) as cofactor.

It carries out the reaction hydrogenselenide + ATP + H2O = selenophosphate + AMP + phosphate + 2 H(+). In terms of biological role, synthesizes selenophosphate from selenide and ATP. This Photobacterium profundum (strain SS9) protein is Selenide, water dikinase.